The chain runs to 159 residues: Nascent polypeptide-associated complex subunit beta (159 aa).

Disordered stretches follow at residues methionine 1–aspartate 39 and glutamate 121–glutamate 159. Positions threonine 23–histidine 32 are enriched in basic residues. The region spanning glycine 36–valine 101 is the NAC-A/B domain. A compositionally biased stretch (acidic residues) spans lysine 136–asparagine 153.

The protein belongs to the NAC-beta family. As to quaternary structure, part of the nascent polypeptide-associated complex (NAC), consisting of EGD2 and EGD1. NAC associates with ribosomes via EGD1.

The protein resides in the cytoplasm. It is found in the nucleus. Its function is as follows. Component of the nascent polypeptide-associated complex (NAC), a dynamic component of the ribosomal exit tunnel, protecting the emerging polypeptides from interaction with other cytoplasmic proteins to ensure appropriate nascent protein targeting. The NAC complex also promotes mitochondrial protein import by enhancing productive ribosome interactions with the outer mitochondrial membrane and blocks the inappropriate interaction of ribosomes translating non-secretory nascent polypeptides with translocation sites in the membrane of the endoplasmic reticulum. EGD1 may act as a transcription factor that exert a negative effect on the expression of several genes that are transcribed by RNA polymerase II. This is Nascent polypeptide-associated complex subunit beta (egd1) from Botryotinia fuckeliana (strain B05.10) (Noble rot fungus).